A 316-amino-acid chain; its full sequence is Aspartate carbamoyltransferase catalytic subunit (316 aa).

Residues Arg66 and Thr67 each coordinate carbamoyl phosphate. Lys94 contributes to the L-aspartate binding site. Carbamoyl phosphate is bound by residues Arg116, His146, and Gln149. 2 residues coordinate L-aspartate: Arg179 and Arg234. Carbamoyl phosphate contacts are provided by Gly275 and Pro276.

It belongs to the aspartate/ornithine carbamoyltransferase superfamily. ATCase family. In terms of assembly, heterododecamer (2C3:3R2) of six catalytic PyrB chains organized as two trimers (C3), and six regulatory PyrI chains organized as three dimers (R2).

The catalysed reaction is carbamoyl phosphate + L-aspartate = N-carbamoyl-L-aspartate + phosphate + H(+). Its pathway is pyrimidine metabolism; UMP biosynthesis via de novo pathway; (S)-dihydroorotate from bicarbonate: step 2/3. Functionally, catalyzes the condensation of carbamoyl phosphate and aspartate to form carbamoyl aspartate and inorganic phosphate, the committed step in the de novo pyrimidine nucleotide biosynthesis pathway. In Nitrosomonas europaea (strain ATCC 19718 / CIP 103999 / KCTC 2705 / NBRC 14298), this protein is Aspartate carbamoyltransferase catalytic subunit.